We begin with the raw amino-acid sequence, 201 residues long: MGKVRAFFSRKGRGNSSGRSRSMREAAMNVDWSPRPSDLAAAAAAKPRPPAAEDETERVFRKFDANGDGRISRAELAALFRSVGHAVTDDEVARMMQEADSDGDGYISLGEFAAISAPPPGDAAAAEEDLRHAFGVFDADGNGVITPAELARVLRGIGEAATVAQCRRMIDGVDRNGDGLINFEEFKLMMAAGAGFGRIAS.

The interval 1 to 55 (MGKVRAFFSRKGRGNSSGRSRSMREAAMNVDWSPRPSDLAAAAAAKPRPPAAEDE) is disordered. 4 consecutive EF-hand domains span residues 51–86 (AAED…VGHA), 87–122 (VTDD…PPGD), 125–160 (AAEE…IGEA), and 161–196 (ATVA…GAGF). D64, N66, D68, R70, E75, D100, D102, D104, Y106, E111, D138, D140, N142, E149, D174, N176, D178, and E185 together coordinate Ca(2+).

Potential calcium sensor. This Oryza sativa subsp. japonica (Rice) protein is Probable calcium-binding protein CML15 (CML15).